Consider the following 528-residue polypeptide: Phosphoenolpyruvate carboxykinase (ATP) (528 aa).

Residues R56, Y192, and K198 each coordinate substrate. Residues K198, H217, and 233–241 (GLSGTGKTT) contribute to the ATP site. 2 residues coordinate Mn(2+): K198 and H217. A Mn(2+)-binding site is contributed by D254. ATP-binding residues include E282, R319, and T444. R319 contributes to the substrate binding site.

This sequence belongs to the phosphoenolpyruvate carboxykinase (ATP) family. Mn(2+) is required as a cofactor.

It is found in the cytoplasm. It carries out the reaction oxaloacetate + ATP = phosphoenolpyruvate + ADP + CO2. Its pathway is carbohydrate biosynthesis; gluconeogenesis. Functionally, involved in the gluconeogenesis. Catalyzes the conversion of oxaloacetate (OAA) to phosphoenolpyruvate (PEP) through direct phosphoryl transfer between the nucleoside triphosphate and OAA. The sequence is that of Phosphoenolpyruvate carboxykinase (ATP) from Bacillus cereus (strain ATCC 10987 / NRS 248).